The primary structure comprises 159 residues: MIFKHTQTSRAELSGTKLRSLAFALLTRKEYSKSELIEKLKLYAVDENEVIQLVDELSDQHYQSDQRVAELVLSSQLRKGKGPNRIKQALKNKELDTALINDEIQDIDWLEQAYQLKVKKFGTDVETDAKLKAKQIRFLQYRGFDMDIIMKAIHRIEEE.

The protein belongs to the RecX family.

It is found in the cytoplasm. Modulates RecA activity. The protein is Regulatory protein RecX of Acinetobacter baylyi (strain ATCC 33305 / BD413 / ADP1).